The primary structure comprises 236 residues: Purine nucleoside phosphorylase DeoD-type (236 aa).

His5 is a binding site for a purine D-ribonucleoside. Phosphate contacts are provided by residues Gly21, Arg25, Arg44, and 88 to 91 (RVGT). A purine D-ribonucleoside is bound by residues 180–182 (EME) and 204–205 (SD). Asp205 (proton donor) is an active-site residue.

Belongs to the PNP/UDP phosphorylase family. As to quaternary structure, homohexamer; trimer of homodimers.

It catalyses the reaction a purine D-ribonucleoside + phosphate = a purine nucleobase + alpha-D-ribose 1-phosphate. The catalysed reaction is a purine 2'-deoxy-D-ribonucleoside + phosphate = a purine nucleobase + 2-deoxy-alpha-D-ribose 1-phosphate. Functionally, catalyzes the reversible phosphorolytic breakdown of the N-glycosidic bond in the beta-(deoxy)ribonucleoside molecules, with the formation of the corresponding free purine bases and pentose-1-phosphate. This chain is Purine nucleoside phosphorylase DeoD-type, found in Shewanella amazonensis (strain ATCC BAA-1098 / SB2B).